A 904-amino-acid chain; its full sequence is Structural polyprotein (904 aa).

3 disordered regions span residues 1–27, 35–54, and 320–348; these read ADQE…VETE, VETP…SARS, and NNSN…KIGP. Polar residues predominate over residues 39–53; it reads NRINTPMAQDTSSAR. The segment covering 329 to 343 has biased composition (basic and acidic residues); that stretch reads VKEKTKNIPKPKTEN.

The protein belongs to the picornaviruses polyprotein family. In terms of processing, specific enzymatic cleavages in vivo yield mature proteins.

It localises to the virion. Its subcellular location is the host cytoplasm. In terms of biological role, structural polyprotein: precursor of all the viral capsid proteins. Functionally, forms, together with protein VP2 and protein VP3, an icosahedral capsid protecting the viral RNA genome. The icosahedral capsid has a pseudo-T=3 symmetry with a diameter of approximately 300 Angstroms, and is composed of 60 copies of each capsid proteins. Its function is as follows. Forms, together with protein VP1 and protein VP3, an icosahedral capsid protecting the viral RNA genome. The icosahedral capsid has a pseudo-T=3 symmetry with a diameter of approximately 300 Angstroms, and is composed of 60 copies of each capsid proteins. Forms, together with protein VP1 and protein VP2, an icosahedral capsid protecting the viral RNA genome. The icosahedral capsid has a pseudo-T=3 symmetry with a diameter of approximately 300 Angstroms, and is composed of 60 copies of each capsid proteins. The protein is Structural polyprotein of Apis mellifera (Honeybee).